The chain runs to 203 residues: Pyrrolidone-carboxylate peptidase (203 aa).

Catalysis depends on residues Glu-78, Cys-141, and His-165.

It belongs to the peptidase C15 family. In terms of assembly, homotetramer.

The protein resides in the cytoplasm. The catalysed reaction is Release of an N-terminal pyroglutamyl group from a polypeptide, the second amino acid generally not being Pro.. Removes 5-oxoproline from various penultimate amino acid residues except L-proline. The polypeptide is Pyrrolidone-carboxylate peptidase (Thermoanaerobacter pseudethanolicus (strain ATCC 33223 / 39E) (Clostridium thermohydrosulfuricum)).